The following is a 72-amino-acid chain: uncharacterized protein (72 aa).

The protein belongs to the ycf76 family.

The protein localises to the plastid. Its subcellular location is the chloroplast. This is an uncharacterized protein from Oryza nivara (Indian wild rice).